The sequence spans 71 residues: Small ribosomal subunit protein bS18 (71 aa).

The protein belongs to the bacterial ribosomal protein bS18 family. Part of the 30S ribosomal subunit. Forms a tight heterodimer with protein bS6.

Functionally, binds as a heterodimer with protein bS6 to the central domain of the 16S rRNA, where it helps stabilize the platform of the 30S subunit. This chain is Small ribosomal subunit protein bS18, found in Nostoc sp. (strain PCC 7120 / SAG 25.82 / UTEX 2576).